The primary structure comprises 459 residues: MAPLCPSPWLPLLIPAPAPGLTVQLLLSLLLLVPVHPQRLPRMQEDSPLGGGSSGEDDPLGEEDLPSEEDSPREEDPPGEEDLPGEEDLPGEEDLPEVKPKSEEEGSLKLEDLPTVEAPGDPQEPQNNAHRDKEGDDQSHWRYGGDPPWPRVSPACAGRFQSPVDIRPQLAAFCPALRPLELLGFQLPPLPELRLRNNGHSVQLTLPPGLEMALGPGREYRALQLHLHWGAAGRPGSEHTVEGHRFPAEIHVVHLSTAFARVDEALGRPGGLAVLAAFLEEGPEENSAYEQLLSRLEEIAEEGSETQVPGLDISALLPSDFSRYFQYEGSLTTPPCAQGVIWTVFNQTVMLSAKQLHTLSDTLWGPGDSRLQLNFRATQPLNGRVIEASFPAGVDSSPRAAEPVQLNSCLAAGDILALVFGLLFAVTSVAFLVQMRRQHRRGTKGGVSYRPAEVAETGA.

The first 37 residues, 1–37, serve as a signal peptide directing secretion; the sequence is MAPLCPSPWLPLLIPAPAPGLTVQLLLSLLLLVPVHP. Residues 38-112 form a proteoglycan-like (PG) region; the sequence is QRLPRMQEDS…EEEGSLKLED (75 aa). The Extracellular segment spans residues 38–414; the sequence is QRLPRMQEDS…QLNSCLAAGD (377 aa). A disordered region spans residues 42-154; the sequence is RMQEDSPLGG…GDPPWPRVSP (113 aa). Residues 55 to 95 show a composition bias toward acidic residues; that stretch reads GEDDPLGEEDLPSEEDSPREEDPPGEEDLPGEEDLPGEEDL. Basic and acidic residues predominate over residues 96 to 112; the sequence is PEVKPKSEEEGSLKLED. Thr115 is a glycosylation site (O-linked (GlcNAc...) threonine). Over residues 129–140 the composition is skewed to basic and acidic residues; that stretch reads AHRDKEGDDQSH. The segment at 138–391 is catalytic; the sequence is QSHWRYGGDP…NGRVIEASFP (254 aa). Positions 139-390 constitute an Alpha-carbonic anhydrase domain; sequence SHWRYGGDPP…LNGRVIEASF (252 aa). Cysteines 156 and 336 form a disulfide. His200 acts as the Proton donor/acceptor in catalysis. The Zn(2+) site is built by His226, His228, and His251. 332 to 333 serves as a coordination point for substrate; the sequence is TT. N-linked (GlcNAc...) asparagine glycosylation is present at Asn346. The chain crosses the membrane as a helical span at residues 415-435; sequence ILALVFGLLFAVTSVAFLVQM. Over 436-459 the chain is Cytoplasmic; that stretch reads RRQHRRGTKGGVSYRPAEVAETGA. Residue Tyr449 is modified to Phosphotyrosine.

This sequence belongs to the alpha-carbonic anhydrase family. In terms of assembly, forms oligomers linked by disulfide bonds. Zn(2+) serves as cofactor. Post-translationally, asn-346 bears high-mannose type glycan structures. In terms of tissue distribution, expressed primarily in carcinoma cells lines. Expression is restricted to very few normal tissues and the most abundant expression is found in the epithelial cells of gastric mucosa.

The protein localises to the nucleus. The protein resides in the nucleolus. Its subcellular location is the cell membrane. It localises to the cell projection. It is found in the microvillus membrane. The enzyme catalyses hydrogencarbonate + H(+) = CO2 + H2O. Its activity is regulated as follows. Inhibited by coumarins, saccharin, sulfonamide derivatives such as acetazolamide (AZA) and Foscarnet (phosphonoformate trisodium salt). Functionally, catalyzes the interconversion between carbon dioxide and water and the dissociated ions of carbonic acid (i.e. bicarbonate and hydrogen ions). The sequence is that of Carbonic anhydrase 9 (CA9) from Homo sapiens (Human).